A 74-amino-acid chain; its full sequence is Protein translocase subunit SecE (74 aa).

The Cytoplasmic segment spans residues 1 to 36; sequence MKTDFNQKIEQLKEFIEECRRVWLVLKKPTKDEYLA. A helical membrane pass occupies residues 37 to 62; sequence VAKVTALGISLLGIIGYIIHVPATYI. Residues 63 to 74 lie on the Extracellular side of the membrane; it reads KGILKPPTTPRV.

This sequence belongs to the SecE/SEC61-gamma family. Component of the Sec protein translocase complex. Heterotrimer consisting of alpha (SecY), beta (SecG) and gamma (SecE) subunits. The heterotrimers can form oligomers, although 1 heterotrimer is thought to be able to translocate proteins. Interacts with the ribosome. May interact with SecDF, and other proteins may be involved.

The protein localises to the cell membrane. Essential subunit of the protein translocation channel SecYEG. Clamps together the 2 halves of SecY. May contact the channel plug during translocation. The protein is Protein translocase subunit SecE of Methanocaldococcus jannaschii (strain ATCC 43067 / DSM 2661 / JAL-1 / JCM 10045 / NBRC 100440) (Methanococcus jannaschii).